A 305-amino-acid chain; its full sequence is Protoheme IX farnesyltransferase (305 aa).

The next 9 helical transmembrane spans lie at 28–48 (IIEL…QGVP), 52–72 (LVLL…ALNM), 101–121 (LAFG…TVNW), 122–142 (LSAW…TMIL), 149–169 (NIVW…SSVT), 174–194 (WAPV…YWPL), 218–238 (VVAR…LLLT), 240–260 (LGYT…FWLW), and 283–303 (LFHW…VDPF).

It belongs to the UbiA prenyltransferase family. Protoheme IX farnesyltransferase subfamily.

It localises to the cell membrane. It carries out the reaction heme b + (2E,6E)-farnesyl diphosphate + H2O = Fe(II)-heme o + diphosphate. It participates in porphyrin-containing compound metabolism; heme O biosynthesis; heme O from protoheme: step 1/1. Its function is as follows. Converts heme B (protoheme IX) to heme O by substitution of the vinyl group on carbon 2 of heme B porphyrin ring with a hydroxyethyl farnesyl side group. This is Protoheme IX farnesyltransferase from Streptomyces avermitilis (strain ATCC 31267 / DSM 46492 / JCM 5070 / NBRC 14893 / NCIMB 12804 / NRRL 8165 / MA-4680).